Consider the following 164-residue polypeptide: Large ribosomal subunit protein uL23 (164 aa).

The segment at 1 to 41 (MPAKAASAAASKKNSAPKSAVSKKVAKKGAPAAAAKPTKVV) is disordered.

This sequence belongs to the universal ribosomal protein uL23 family.

This protein binds to a specific region on the 26S rRNA. The chain is Large ribosomal subunit protein uL23 (RPL23A) from Trypanosoma brucei brucei.